The chain runs to 492 residues: Variant surface glycoprotein MITAT 1.1 (492 aa).

Positions 1-32 (MATGRAKNTKWARWLSTAGLIIVVTLPATTMA) are cleaved as a signal peptide. 2 disulfide bridges follow: Cys47/Cys177 and Cys155/Cys222. Residues Asn298 and Asn471 are each glycosylated (N-linked (GlcNAc...) asparagine). Ser475 carries the GPI-anchor amidated serine lipid modification. The propeptide at 476–492 (NSFLIHKAPLLLAFLLF) is removed in mature form.

The protein resides in the cell membrane. Functionally, VSG forms a coat on the surface of the parasite. The trypanosome evades the immune response of the host by expressing a series of antigenically distinct VSGs from an estimated 1000 VSG genes. The polypeptide is Variant surface glycoprotein MITAT 1.1 (Trypanosoma brucei brucei).